The following is a 182-amino-acid chain: T-cell surface glycoprotein CD3 gamma chain (182 aa).

The first 22 residues, 1-22, serve as a signal peptide directing secretion; sequence MEQGKGLAGLFLVISLLQGTMA. Residues 23–116 lie on the Extracellular side of the membrane; sequence QQKEEKHLVK…CIELNMGTVS (94 aa). The Ig-like domain maps to 37–94; it reads QGDGSVLLTCDFNEKTITWLKDGHRISPPNATKSTWNLGNGAKDPRGMYQCRGAKKKS. Cys46 and Cys87 are oxidised to a cystine. An N-linked (GlcNAc...) asparagine glycan is attached at Asn66. Residues 117–137 form a helical membrane-spanning segment; the sequence is GFIFAEIISIFFLAVGVYFIA. The Cytoplasmic portion of the chain corresponds to 138 to 182; that stretch reads GQDGVRQSRASDKQTLLQNEQVYQPLKDREYEQYSRLQGNQVRKK. Residue Ser145 is modified to Phosphoserine. Ser148 carries the post-translational modification Phosphoserine; by PKC. The region spanning 149–177 is the ITAM domain; the sequence is DKQTLLQNEQVYQPLKDREYEQYSRLQGN. The Di-leucine motif signature appears at 153–154; sequence LL.

The TCR-CD3 complex is composed of a CD3D/CD3E and a CD3G/CD3E heterodimers that preferentially associate with TCRalpha and TCRbeta, respectively, to form TCRalpha/CD3E/CD3G and TCRbeta/CD3G/CD3E trimers. In turn, the hexamer interacts with CD3Z homodimer to form the TCR-CD3 complex. Alternatively, TCRalpha and TCRbeta can be replaced by TCRgamma and TCRdelta. In terms of processing, phosphorylated on Tyr residues after T-cell receptor triggering by LCK in association with CD4/CD8. Phosphorylated also by PKC; leading to the TCR complex down-regulation. Phosphorylated on Tyr residues after T-cell receptor triggering by LCK in association with CD4/CD8.

The protein localises to the cell membrane. In terms of biological role, part of the TCR-CD3 complex present on T-lymphocyte cell surface that plays an essential role in adaptive immune response. When antigen presenting cells (APCs) activate T-cell receptor (TCR), TCR-mediated signals are transmitted across the cell membrane by the CD3 chains CD3D, CD3E, CD3G and CD3Z. All CD3 chains contain immunoreceptor tyrosine-based activation motifs (ITAMs) in their cytoplasmic domain. Upon TCR engagement, these motifs become phosphorylated by Src family protein tyrosine kinases LCK and FYN, resulting in the activation of downstream signaling pathways. In addition to this role of signal transduction in T-cell activation, CD3G plays an essential role in the dynamic regulation of TCR expression at the cell surface. Indeed, constitutive TCR cycling is dependent on the di-leucine-based (diL) receptor-sorting motif present in CD3G. This Rattus norvegicus (Rat) protein is T-cell surface glycoprotein CD3 gamma chain (Cd3g).